A 207-amino-acid polypeptide reads, in one-letter code: Thymidine kinase (207 aa).

ATP-binding positions include G15–S22 and D88–Q91. The Proton acceptor role is filled by E89. C145, C148, C183, and H186 together coordinate Zn(2+).

This sequence belongs to the thymidine kinase family. In terms of assembly, homotetramer.

It is found in the cytoplasm. It carries out the reaction thymidine + ATP = dTMP + ADP + H(+). The chain is Thymidine kinase from Oceanobacillus iheyensis (strain DSM 14371 / CIP 107618 / JCM 11309 / KCTC 3954 / HTE831).